The chain runs to 447 residues: N-succinylarginine dihydrolase (447 aa).

Substrate contacts are provided by residues 19–28 (AGLSFGNEAS), Asn110, and 137–138 (HR). The active site involves Glu174. Arg212 contributes to the substrate binding site. Residue His248 is part of the active site. Residues Asp250 and Asn359 each coordinate substrate. Cys365 serves as the catalytic Nucleophile.

It belongs to the succinylarginine dihydrolase family. Homodimer.

The catalysed reaction is N(2)-succinyl-L-arginine + 2 H2O + 2 H(+) = N(2)-succinyl-L-ornithine + 2 NH4(+) + CO2. It functions in the pathway amino-acid degradation; L-arginine degradation via AST pathway; L-glutamate and succinate from L-arginine: step 2/5. Catalyzes the hydrolysis of N(2)-succinylarginine into N(2)-succinylornithine, ammonia and CO(2). This chain is N-succinylarginine dihydrolase, found in Salmonella gallinarum (strain 287/91 / NCTC 13346).